Reading from the N-terminus, the 359-residue chain is MTRPIRATLDLAAIRHNYQQAKACSPESFAFAVIKADAYGHGYEQVAAALAVWPTVLPSSTSSRARTLREAGLRQPILLLEGCFDRAELEEAARLQLTVPFHAAHQFDWLKQGSLPAPLEVMLKLNTGMNRLGFRPDEAPRAAAWLQARNDIRLAGLMTHFATADGDPGIAAQLSRFDEVNASLGLPSCVANSAALMRHPASRRQYVRPGIMLYGASPFADQSAAELGLRPAMRLEADIIGVQSLQAGDAVGYGATFVADRPMRIGVVACGYADGYPRVAPAGTPCAIGGQPARLVGRVSMDMLTIDLTSLPQAGVGDRVTLWGGDGVSIDDVATAAGTIGYELMCALAPRVPRRVVGA.

Residue lysine 35 is the Proton acceptor; specific for D-alanine of the active site. The residue at position 35 (lysine 35) is an N6-(pyridoxal phosphate)lysine. A substrate-binding site is contributed by arginine 131. Tyrosine 253 serves as the catalytic Proton acceptor; specific for L-alanine. Methionine 301 lines the substrate pocket.

It belongs to the alanine racemase family. The cofactor is pyridoxal 5'-phosphate.

The enzyme catalyses L-alanine = D-alanine. It functions in the pathway amino-acid biosynthesis; D-alanine biosynthesis; D-alanine from L-alanine: step 1/1. Functionally, catalyzes the interconversion of L-alanine and D-alanine. May also act on other amino acids. The protein is Alanine racemase (alr) of Laribacter hongkongensis (strain HLHK9).